The chain runs to 321 residues: Leucine-rich repeat-containing protein 46 (321 aa).

LRR repeat units lie at residues 45 to 66 (ELQT…EGLK), 67 to 88 (NLHS…ACVP), 89 to 110 (SLRF…LDLP), and 111 to 132 (CLQF…EFPQ). Residues 142–184 (NSCTNQDSYRELVIEALPLLLDLDGQPVMERWISDEEDEASSE) enclose the LRRCT domain. Phosphoserine occurs at positions 175 and 182. Positions 198 to 222 (RGFLKELEQELSRHREHRQQAALTQ) form a coiled coil. The disordered stretch occupies residues 235 to 321 (NLPLLPGVPM…TKTMAKRSKK (87 aa)).

Its subcellular location is the cell projection. The protein localises to the cilium. It localises to the flagellum. In terms of biological role, required for normal spermatogenesis and male fertility. Plays an important role in sperm flagellum biogenesis. The chain is Leucine-rich repeat-containing protein 46 (LRRC46) from Macaca fascicularis (Crab-eating macaque).